We begin with the raw amino-acid sequence, 79 residues long: Small ribosomal subunit protein bS18 (79 aa).

The protein belongs to the bacterial ribosomal protein bS18 family. Part of the 30S ribosomal subunit. Forms a tight heterodimer with protein bS6.

Functionally, binds as a heterodimer with protein bS6 to the central domain of the 16S rRNA, where it helps stabilize the platform of the 30S subunit. This chain is Small ribosomal subunit protein bS18, found in Renibacterium salmoninarum (strain ATCC 33209 / DSM 20767 / JCM 11484 / NBRC 15589 / NCIMB 2235).